A 320-amino-acid chain; its full sequence is Malate dehydrogenase (320 aa).

Residues 10-15 and aspartate 34 each bind NAD(+); that span reads GAGQIG. Residues arginine 83 and arginine 89 each coordinate substrate. NAD(+) is bound by residues asparagine 96 and 119 to 121; that span reads ITN. The substrate site is built by asparagine 121 and arginine 152. The active-site Proton acceptor is histidine 176.

This sequence belongs to the LDH/MDH superfamily. MDH type 3 family.

The catalysed reaction is (S)-malate + NAD(+) = oxaloacetate + NADH + H(+). Its function is as follows. Catalyzes the reversible oxidation of malate to oxaloacetate. In Jannaschia sp. (strain CCS1), this protein is Malate dehydrogenase.